The following is a 302-amino-acid chain: Recombination-associated protein RdgC (302 aa).

Belongs to the RdgC family.

The protein localises to the cytoplasm. Its subcellular location is the nucleoid. In terms of biological role, may be involved in recombination. This Psychromonas ingrahamii (strain DSM 17664 / CCUG 51855 / 37) protein is Recombination-associated protein RdgC.